Reading from the N-terminus, the 263-residue chain is 7beta-hydroxysteroid dehydrogenase (263 aa).

NADP(+)-binding positions include 17–21 (TEGVG), 40–41 (RR), and 66–67 (DF). Tyr156 serves as the catalytic Proton acceptor. NADP(+) is bound at residue Ser240.

This sequence belongs to the short-chain dehydrogenases/reductases (SDR) family.

The enzyme catalyses a 7beta-hydroxysteroid + NADP(+) = a 7-oxosteroid + NADPH + H(+). The catalysed reaction is 7-oxolithocholate + NADPH + H(+) = ursodeoxycholate + NADP(+). 7beta-hydroxysteroid dehydrogenase that catalyzes the reduction of the 7-oxo group of 7-oxo-lithocholate (7-oxo-LCA), to yield ursodeoxycholate (UDCA). As R.gnavus is a common core bacterium of the human gut microbiota, this enzyme contributes to the formation of UDCA in the human colon. UDCA is regarded as a chemopreventive beneficial secondary bile acid due to its low hydrophobicity; it protects hepatocytes and bile duct epithelial cells against necrosis and apoptosis induced by more hydrophobic secondary bile acids like deoxycholate (DCA). This enzyme is also able to catalyze the reverse reaction in vitro, i.e. the oxidation of the 7beta-hydroxy group of UDCA to 7-oxo-LCA, but much less efficiently than the reduction reaction. This Mediterraneibacter gnavus (strain ATCC 29149 / DSM 114966 / JCM 6515 / VPI C7-9) (Ruminococcus gnavus) protein is 7beta-hydroxysteroid dehydrogenase.